A 406-amino-acid polypeptide reads, in one-letter code: Zinc metalloprotease Rip1 (406 aa).

Residues 1-21 (MMFGIGIVLFALAILVSVALH) form a helical membrane-spanning segment. His-21 provides a ligand contact to Zn(2+). The active site involves Glu-22. His-25 serves as a coordination point for Zn(2+). The helical transmembrane segment at 108 to 128 (PAMNFVIGLVLIYGIAIVWGL) threads the bilayer. The PDZ domain occupies 125–209 (VWGLPNLHQP…RIEFKRDGRV (85 aa)). Asp-206 lines the Zn(2+) pocket. 2 helical membrane passes run 327 to 349 (NFVL…IAVA) and 375 to 395 (LMPA…LTVT).

It belongs to the peptidase M50B family. The cofactor is Zn(2+).

It localises to the cell membrane. Its activity is regulated as follows. Proteolysis is inhibited by Wag31; when Wag31 is non-functional oxidative stress increases proteolysis. A probable intramembrane site-2 protease (S2P) that cleaves type-2 transmembrane proteins within their membrane-spanning domains. Degrades PbpB (PBP3, FtsI) under conditions of oxidatives stress; degradation is inhibited by Wag31-PbpB interaction. Also cleaves anti-sigma factors RskA, RslA and RslM. Site-1 proteases have not yet been identified in this organism. Functionally, regulated intramembrane proteolysis (RIP) occurs when an extracytoplasmic signal (possibly oxidative stress) triggers a concerted proteolytic cascade to transmit information and elicit cellular responses. The membrane-spanning regulatory substrate protein (includes anti-sigma factors RskA, RslA, RsmA, and PbpB) is first cut extracytoplasmically (site-1 protease, S1P), then within the membrane itself (site-2 protease, S2P, this entry), while cytoplasmic proteases finish degrading the regulatory protein, liberating the effector protein (ECF sigma factors SigK, SigL and SigM). In Mycolicibacterium smegmatis (strain ATCC 700084 / mc(2)155) (Mycobacterium smegmatis), this protein is Zinc metalloprotease Rip1 (rip1).